A 796-amino-acid polypeptide reads, in one-letter code: Molybdenum cofactor sulfurase (796 aa).

K246 carries the post-translational modification N6-(pyridoxal phosphate)lysine. Residue C418 is part of the active site. Residues L650–T796 form the MOSC domain. Position 752 is a phosphoserine (S752).

Belongs to the class-V pyridoxal-phosphate-dependent aminotransferase family. MOCOS subfamily. Pyridoxal 5'-phosphate serves as cofactor.

The enzyme catalyses Mo-molybdopterin + L-cysteine + AH2 = thio-Mo-molybdopterin + L-alanine + A + H2O. Its function is as follows. Sulfurates the molybdenum cofactor. Sulfation of molybdenum is essential for xanthine dehydrogenase (XDH) and aldehyde oxidase (ADO) enzymes in which molybdenum cofactor is liganded by 1 oxygen and 1 sulfur atom in active form. The polypeptide is Molybdenum cofactor sulfurase (Drosophila persimilis (Fruit fly)).